Reading from the N-terminus, the 250-residue chain is Ubiquinone/menaquinone biosynthesis C-methyltransferase UbiE (250 aa).

S-adenosyl-L-methionine-binding positions include T73, D94, and 122 to 123; that span reads DA.

Belongs to the class I-like SAM-binding methyltransferase superfamily. MenG/UbiE family.

The enzyme catalyses a 2-demethylmenaquinol + S-adenosyl-L-methionine = a menaquinol + S-adenosyl-L-homocysteine + H(+). It catalyses the reaction a 2-methoxy-6-(all-trans-polyprenyl)benzene-1,4-diol + S-adenosyl-L-methionine = a 5-methoxy-2-methyl-3-(all-trans-polyprenyl)benzene-1,4-diol + S-adenosyl-L-homocysteine + H(+). It participates in quinol/quinone metabolism; menaquinone biosynthesis; menaquinol from 1,4-dihydroxy-2-naphthoate: step 2/2. The protein operates within cofactor biosynthesis; ubiquinone biosynthesis. Methyltransferase required for the conversion of demethylmenaquinol (DMKH2) to menaquinol (MKH2) and the conversion of 2-polyprenyl-6-methoxy-1,4-benzoquinol (DDMQH2) to 2-polyprenyl-3-methyl-6-methoxy-1,4-benzoquinol (DMQH2). This Coxiella burnetii (strain RSA 331 / Henzerling II) protein is Ubiquinone/menaquinone biosynthesis C-methyltransferase UbiE.